A 418-amino-acid chain; its full sequence is Actin-related protein 3-A (418 aa).

This sequence belongs to the actin family. ARP3 subfamily. In terms of assembly, component of the Arp2/3 complex composed of actr2/arp2, actr3/arp3, arpc1 (arpc1a or arpc1b), arpc2, arpc3, arpc4 and arpc5.

The protein resides in the cytoplasm. Its subcellular location is the cytoskeleton. The protein localises to the cell projection. It localises to the nucleus. Its function is as follows. ATP-binding component of the Arp2/3 complex, a multiprotein complex that mediates actin polymerization upon stimulation by nucleation-promoting factor (NPF). The Arp2/3 complex mediates the formation of branched actin networks in the cytoplasm, providing the force for cell motility. Seems to contact the pointed end of the daughter actin filament. In addition to its role in the cytoplasmic cytoskeleton, the Arp2/3 complex also promotes actin polymerization in the nucleus, thereby regulating gene transcription and repair of damaged DNA. The Arp2/3 complex promotes homologous recombination (HR) repair in response to DNA damage by promoting nuclear actin polymerization, leading to drive motility of double-strand breaks (DSBs). The chain is Actin-related protein 3-A from Xenopus laevis (African clawed frog).